A 252-amino-acid polypeptide reads, in one-letter code: 5'-nucleotidase SurE (252 aa).

The a divalent metal cation site is built by Asp8, Asp9, Ser40, and Asn93.

It belongs to the SurE nucleotidase family. A divalent metal cation is required as a cofactor.

It localises to the cytoplasm. It catalyses the reaction a ribonucleoside 5'-phosphate + H2O = a ribonucleoside + phosphate. Nucleotidase that shows phosphatase activity on nucleoside 5'-monophosphates. This is 5'-nucleotidase SurE from Erythrobacter litoralis (strain HTCC2594).